The sequence spans 174 residues: Secreted cysteine-rich protein UMAG_00792 (174 aa).

The N-terminal stretch at 1 to 26 is a signal peptide; that stretch reads MVSFKSSSLFLHSLSALLVLTTLSSA. Asn-77 is a glycosylation site (N-linked (GlcNAc...) asparagine).

In terms of assembly, secreted cysteine-rich proteins (SCRPs) are predicted to form amyloids.

The protein localises to the secreted. Its function is as follows. Secreted cysteine-rich protein that might form amyloid strutures which are involved in attachment to hydrophobic surfaces and in formation of hydrophobic aerial hyphae. This Mycosarcoma maydis (Corn smut fungus) protein is Secreted cysteine-rich protein UMAG_00792.